The following is a 251-amino-acid chain: Ubiquinone/menaquinone biosynthesis C-methyltransferase UbiE (251 aa).

S-adenosyl-L-methionine contacts are provided by residues threonine 74, aspartate 95, and 123 to 124 (NA).

The protein belongs to the class I-like SAM-binding methyltransferase superfamily. MenG/UbiE family.

It catalyses the reaction a 2-demethylmenaquinol + S-adenosyl-L-methionine = a menaquinol + S-adenosyl-L-homocysteine + H(+). It carries out the reaction a 2-methoxy-6-(all-trans-polyprenyl)benzene-1,4-diol + S-adenosyl-L-methionine = a 5-methoxy-2-methyl-3-(all-trans-polyprenyl)benzene-1,4-diol + S-adenosyl-L-homocysteine + H(+). It participates in quinol/quinone metabolism; menaquinone biosynthesis; menaquinol from 1,4-dihydroxy-2-naphthoate: step 2/2. Its pathway is cofactor biosynthesis; ubiquinone biosynthesis. Its function is as follows. Methyltransferase required for the conversion of demethylmenaquinol (DMKH2) to menaquinol (MKH2) and the conversion of 2-polyprenyl-6-methoxy-1,4-benzoquinol (DDMQH2) to 2-polyprenyl-3-methyl-6-methoxy-1,4-benzoquinol (DMQH2). The protein is Ubiquinone/menaquinone biosynthesis C-methyltransferase UbiE of Edwardsiella ictaluri (strain 93-146).